Reading from the N-terminus, the 492-residue chain is MTRLTDLGVTDLRDGIAKGDFSAKEVAESFLTATNEAEKLNAFITLTPDHALKQAEKADKDRASGQLKPLSGVPLGIKDLFCTNGYRTTAASKIIDNFVPPYESTITEKLFSAGAGMVGKLNLDQFAMGSSNETSAFGNVISPWRQKGDDTALTPGGSSGGSAAAVAAKLVPAATGTDTGGSIRQPASFTGITGLKPTYGRCSRYGVIAFASSLDQAGPMAHSVKDCAALLEVMAGFDPKDSTSVDVMVPNWEKLLSSDIRGKKIGIPKEYRVDGMAPEIESLWQRGIDMMKDAGAEIIDVSLPHTQHALAAYYIIAPAEASSNLARYDGVRYGERKTPEGGNLADMYAATRAAGFGDEVKRRIMIGTYVLSAGFYDAYYIKAQKIRALIARDFEAAFDKCDILLTPATPTAAFALGQKQEDPIAMYLNDVFTVPASLAGLPAMTVPVGLNEQGLPLGLQLIGKPLDEQSVLNAGLALEERAGFTSQPKKWW.

Residues K78 and S158 each act as charge relay system in the active site. The active-site Acyl-ester intermediate is the S182.

Belongs to the amidase family. GatA subfamily. In terms of assembly, heterotrimer of A, B and C subunits.

The catalysed reaction is L-glutamyl-tRNA(Gln) + L-glutamine + ATP + H2O = L-glutaminyl-tRNA(Gln) + L-glutamate + ADP + phosphate + H(+). Its function is as follows. Allows the formation of correctly charged Gln-tRNA(Gln) through the transamidation of misacylated Glu-tRNA(Gln) in organisms which lack glutaminyl-tRNA synthetase. The reaction takes place in the presence of glutamine and ATP through an activated gamma-phospho-Glu-tRNA(Gln). The polypeptide is Glutamyl-tRNA(Gln) amidotransferase subunit A (Zymomonas mobilis subsp. mobilis (strain ATCC 31821 / ZM4 / CP4)).